Here is a 246-residue protein sequence, read N- to C-terminus: Transcription factor MYB113 (246 aa).

2 HTH myb-type domains span residues 5–61 (PKGL…KPSI) and 62–112 (KRGK…SKKH). 2 consecutive DNA-binding regions (H-T-H motif) follow at residues 33–57 (WHRV…LNYL) and 85–108 (WSLI…NTHL).

In terms of assembly, interacts with BHLH002/EGL3/MYC146, BHLH012/MYC1 and BHLH042/TT8.

The protein resides in the nucleus. Functionally, transcription activator, when associated with BHLH002/EGL3/MYC146, BHLH012/MYC1, or BHLH042/TT8. In Arabidopsis thaliana (Mouse-ear cress), this protein is Transcription factor MYB113 (MYB113).